The following is a 154-amino-acid chain: Probable biofilm-surface layer protein B (154 aa).

Positions 1–30 (MLKRTSFVSSLFISSAVLLSILLPSGQAHA) are cleaved as a signal peptide.

The protein belongs to the BslA/BslB family. In terms of assembly, monomer in vitro.

Its subcellular location is the secreted. Its function is as follows. Has a minor role in biofilm architecture. May contribute to the surface hydrophobicity. This Bacillus subtilis (strain 168) protein is Probable biofilm-surface layer protein B.